The sequence spans 295 residues: Iron-sulfur cluster carrier protein (295 aa).

38 to 45 (GKGGVGKS) serves as a coordination point for ATP.

It belongs to the Mrp/NBP35 ATP-binding proteins family. Homodimer.

Functionally, binds and transfers iron-sulfur (Fe-S) clusters to target apoproteins. Can hydrolyze ATP. The polypeptide is Iron-sulfur cluster carrier protein (Pyrococcus furiosus (strain ATCC 43587 / DSM 3638 / JCM 8422 / Vc1)).